A 140-amino-acid polypeptide reads, in one-letter code: ATP synthase epsilon chain (140 aa).

Belongs to the ATPase epsilon chain family. As to quaternary structure, F-type ATPases have 2 components, CF(1) - the catalytic core - and CF(0) - the membrane proton channel. CF(1) has five subunits: alpha(3), beta(3), gamma(1), delta(1), epsilon(1). CF(0) has three main subunits: a, b and c.

It is found in the cell inner membrane. Functionally, produces ATP from ADP in the presence of a proton gradient across the membrane. In Nitrosomonas eutropha (strain DSM 101675 / C91 / Nm57), this protein is ATP synthase epsilon chain.